A 145-amino-acid polypeptide reads, in one-letter code: Hemoglobin subunit beta-3 (145 aa).

Positions 1-145 (MLTAEEKAAV…VANALAHRYH (145 aa)) constitute a Globin domain. At T11 the chain carries Phosphothreonine. K58 bears the N6-acetyllysine mark. H62 contributes to the heme b binding site. K81 carries the N6-acetyllysine modification. H91 contacts heme b. The residue at position 92 (C92) is an S-nitrosocysteine.

This sequence belongs to the globin family. Heterotetramer of two alpha chains and two beta chains. As to expression, red blood cells.

Functionally, involved in oxygen transport from the lung to the various peripheral tissues. The sequence is that of Hemoglobin subunit beta-3 (HBB) from Odocoileus virginianus virginianus (Virginia white-tailed deer).